The following is a 281-amino-acid chain: 2,3,4,5-tetrahydropyridine-2,6-dicarboxylate N-succinyltransferase (281 aa).

Positions 108 and 145 each coordinate substrate.

It belongs to the transferase hexapeptide repeat family. As to quaternary structure, homotrimer.

It localises to the cytoplasm. The enzyme catalyses (S)-2,3,4,5-tetrahydrodipicolinate + succinyl-CoA + H2O = (S)-2-succinylamino-6-oxoheptanedioate + CoA. It participates in amino-acid biosynthesis; L-lysine biosynthesis via DAP pathway; LL-2,6-diaminopimelate from (S)-tetrahydrodipicolinate (succinylase route): step 1/3. The polypeptide is 2,3,4,5-tetrahydropyridine-2,6-dicarboxylate N-succinyltransferase (Parvibaculum lavamentivorans (strain DS-1 / DSM 13023 / NCIMB 13966)).